Consider the following 448-residue polypeptide: tRNA modification GTPase MnmE (448 aa).

Arginine 24, glutamate 81, and lysine 120 together coordinate (6S)-5-formyl-5,6,7,8-tetrahydrofolate. The TrmE-type G domain occupies 216 to 373 (GLNVVLVGAP…LKRTLLREAG (158 aa)). Position 226 (asparagine 226) interacts with K(+). Residues 226 to 231 (NVGKSS), 245 to 251 (TDIAGTT), and 270 to 273 (DTAG) each bind GTP. Residue serine 230 participates in Mg(2+) binding. K(+) is bound by residues threonine 245, isoleucine 247, and threonine 250. Threonine 251 contributes to the Mg(2+) binding site. Lysine 448 is a binding site for (6S)-5-formyl-5,6,7,8-tetrahydrofolate.

Belongs to the TRAFAC class TrmE-Era-EngA-EngB-Septin-like GTPase superfamily. TrmE GTPase family. In terms of assembly, homodimer. Heterotetramer of two MnmE and two MnmG subunits. Requires K(+) as cofactor.

It is found in the cytoplasm. Functionally, exhibits a very high intrinsic GTPase hydrolysis rate. Involved in the addition of a carboxymethylaminomethyl (cmnm) group at the wobble position (U34) of certain tRNAs, forming tRNA-cmnm(5)s(2)U34. This is tRNA modification GTPase MnmE from Neisseria meningitidis serogroup B (strain ATCC BAA-335 / MC58).